The following is a 117-amino-acid chain: Large-conductance mechanosensitive channel (117 aa).

3 consecutive transmembrane segments (helical) span residues 7 to 27 (EFAL…GAAF), 30 to 50 (IVTA…FGTV), and 64 to 84 (GMFV…FIFV).

The protein belongs to the MscL family. In terms of assembly, homopentamer.

It is found in the cell membrane. Functionally, channel that opens in response to stretch forces in the membrane lipid bilayer. May participate in the regulation of osmotic pressure changes within the cell. This chain is Large-conductance mechanosensitive channel, found in Staphylococcus saprophyticus subsp. saprophyticus (strain ATCC 15305 / DSM 20229 / NCIMB 8711 / NCTC 7292 / S-41).